The sequence spans 254 residues: Alcohol dehydrogenase (254 aa).

10–33 provides a ligand contact to NAD(+); it reads FVAGLGGIGLDTSREIVKSGPKNL. Residue Ser138 participates in substrate binding. The active-site Proton acceptor is the Tyr151.

The protein belongs to the short-chain dehydrogenases/reductases (SDR) family. As to quaternary structure, homodimer.

It catalyses the reaction a primary alcohol + NAD(+) = an aldehyde + NADH + H(+). The catalysed reaction is a secondary alcohol + NAD(+) = a ketone + NADH + H(+). The sequence is that of Alcohol dehydrogenase (Adh) from Drosophila mimica (Fruit fly).